The following is a 596-amino-acid chain: MTVEQNLEALDQFPVGMRVLAVDDDQTCLKILESLLRHCQYHVTTTNQAQKALELLRENKNKFDLVISDVDMPDMDGFKLLELVGLEMDLPVIMLSAHSDPKYVMKGVTHGACDYLLKPVRIEELKNIWQHVVRSRFDKNRGSNNNGDKRDGSGNEGVGNSDQNNGKGNRKRKDQYNEDEDEDRDDNDDSCAQKKQRVVWTVELHKKFVAAVNQLGYEKAMPKKILDLMNVEKLTRENVASHLQKFRLYLKRISGVANQQAIMANSELHFMQMNGLDGFHHRPIPVGSGQYHGGAPAMRSFPPNGILGRLNTPSGIGVRSLSSPPAGMFLQNQTDIGKFHHVSSLPLNHSDGGNILQGLPMPLEFDQLQTNNNKSRNMNSNKSIAGTSMAFPSFSTQQNSLISAPNNNVVVLEGHPQATPPGFPGHQINKRLEHWSNAVSSSTHPPPPAHNSNSINHQFDVSPLPHSRPDPLEWNNVSSSYSIPFCDSANTLSSPALDTTNPRAFCRNTDFDSNTNVQPGVFYGPSTDAMALLSSSNPKEGFVVGQQKLQSGGFMVADAGSLDDIVNSTMKQEQSQGDLSGGDLGYGGFSSLRTCI.

One can recognise a Response regulatory domain in the interval 18–133 (RVLAVDDDQT…ELKNIWQHVV (116 aa)). D69 carries the 4-aspartylphosphate modification. Residues 138 to 153 (DKNRGSNNNGDKRDGS) show a composition bias toward basic and acidic residues. Residues 138–192 (DKNRGSNNNGDKRDGSGNEGVGNSDQNNGKGNRKRKDQYNEDEDEDRDDNDDSCA) form a disordered region. Residues 158–167 (VGNSDQNNGK) show a composition bias toward polar residues. Positions 177-189 (NEDEDEDRDDNDD) are enriched in acidic residues. A Nuclear localization signal motif is present at residues 194–197 (KKQR). A DNA-binding region (myb-like GARP) is located at residues 197 to 247 (RVVWTVELHKKFVAAVNQLGYEKAMPKKILDLMNVEKLTRENVASHLQKFR). The interval 437 to 467 (NAVSSSTHPPPPAHNSNSINHQFDVSPLPHS) is disordered. Positions 450-459 (HNSNSINHQF) are enriched in polar residues.

Belongs to the ARR family. Type-B subfamily. As to quaternary structure, binds the target DNA as a monomer. Two-component system major event consists of a His-to-Asp phosphorelay between a sensor histidine kinase (HK) and a response regulator (RR). In plants, the His-to-Asp phosphorelay involves an additional intermediate named Histidine-containing phosphotransfer protein (HPt). This multistep phosphorelay consists of a His-Asp-His-Asp sequential transfer of a phosphate group between first a His and an Asp of the HK protein, followed by the transfer to a conserved His of the HPt protein and finally the transfer to an Asp in the receiver domain of the RR protein. In terms of tissue distribution, detected in the whole plant. Predominantly expressed in leaves. Expressed at the root transition zone.

It is found in the nucleus. Transcriptional activator that binds specifically to the DNA sequence 5'-[AG]GATT-3'. Functions as a response regulator involved in His-to-Asp phosphorelay signal transduction system. Phosphorylation of the Asp residue in the receiver domain activates the ability of the protein to promote the transcription of target genes. Could directly activate some type-A response regulators in response to cytokinins. Involved in the root-meristem size determination through the regulation of cell differentiation. Involved in activating SHY2 during meristem growth and controls PIN expression via activation of SHY2. The polypeptide is Two-component response regulator ARR12 (ARR12) (Arabidopsis thaliana (Mouse-ear cress)).